The chain runs to 829 residues: Probable beta-glucosidase H (829 aa).

Asn13 carries N-linked (GlcNAc...) asparagine glycosylation. Asp225 is a catalytic residue. Asn304, Asn473, Asn602, Asn627, and Asn664 each carry an N-linked (GlcNAc...) asparagine glycan. The 160-residue stretch at 389–548 (RMLSNAVIHF…DPEQMVANAV (160 aa)) folds into the PA14 domain.

The protein belongs to the glycosyl hydrolase 3 family.

It is found in the secreted. The catalysed reaction is Hydrolysis of terminal, non-reducing beta-D-glucosyl residues with release of beta-D-glucose.. It participates in glycan metabolism; cellulose degradation. Functionally, beta-glucosidases are one of a number of cellulolytic enzymes involved in the degradation of cellulosic biomass. Catalyzes the last step releasing glucose from the inhibitory cellobiose. This chain is Probable beta-glucosidase H (bglH), found in Neosartorya fischeri (strain ATCC 1020 / DSM 3700 / CBS 544.65 / FGSC A1164 / JCM 1740 / NRRL 181 / WB 181) (Aspergillus fischerianus).